The primary structure comprises 184 residues: Gremlin-1 (184 aa).

The first 24 residues, 1–24 (MSRTAYTVGALLLLLGTLLPAAEG), serve as a signal peptide directing secretion. The disordered stretch occupies residues 24–77 (GKKKGSQGAIPPPDKAQHNDSEQTQSPQQPGSRNRGRGQGRGTAMPGEEVLESS). N-linked (GlcNAc...) asparagine glycosylation occurs at asparagine 42. 4 disulfides stabilise this stretch: cysteine 94–cysteine 144, cysteine 108–cysteine 158, cysteine 118–cysteine 176, and cysteine 122–cysteine 178. Positions 94-184 (CKTQPLKQTI…QCRCISIDLD (91 aa)) constitute a CTCK domain.

It belongs to the DAN family. As to quaternary structure, homodimer; can also form homooligomers. Interacts with BMP2; can form higher oligomers with BMP2. Interacts with SLIT1 and SLIT2 in a glycosylation-dependent manner. In terms of tissue distribution, highly expressed in small intestine, fetal brain and colon. Expression is restricted to intestinal subepithelial myofibroblasts (ISEMFs) at the crypt base. In subjects with HMPS1, by contrast, GREM1 is expressed, not only in basal ISEMFs, but also at very high levels in epithelial cells (predominantly colonocytes), with expression extending most of the way up the sides of the crypt. Weakly expressed in brain, ovary, prostate, pancreas and skeletal muscle. In brain found in the region localized around the internal capsule in the large subcortical nuclei, including caudate, putamen, substantia nigra, thalamus and subthalamus. Predominantly expressed in normal cells including neurons, astrocytes and fibroblasts.

The protein localises to the secreted. Its function is as follows. Cytokine that may play an important role during carcinogenesis and metanephric kidney organogenesis, as a BMP antagonist required for early limb outgrowth and patterning in maintaining the FGF4-SHH feedback loop. Down-regulates the BMP4 signaling in a dose-dependent manner. Antagonist of BMP2; inhibits BMP2-mediated differentiation of osteoblasts (in vitro). Acts as inhibitor of monocyte chemotaxis. Can inhibit the growth or viability of normal cells but not transformed cells when is overexpressed. The polypeptide is Gremlin-1 (GREM1) (Homo sapiens (Human)).